Reading from the N-terminus, the 304-residue chain is Tetrahydromethanopterin S-methyltransferase subunit E (304 aa).

6 consecutive transmembrane segments (helical) span residues 3–23 (PLIG…AGAS), 86–106 (PLFA…TFAV), 131–151 (HTPV…VVSY), 152–172 (LMTV…IWGI), 233–253 (PVTG…TTVF), and 263–283 (WISV…NWKI).

It belongs to the MtrE family. The complex is composed of 8 subunits; MtrA, MtrB, MtrC, MtrD, MtrE, MtrF, MtrG and MtrH.

The protein resides in the cell membrane. It catalyses the reaction 5-methyl-5,6,7,8-tetrahydromethanopterin + coenzyme M + 2 Na(+)(in) = 5,6,7,8-tetrahydromethanopterin + methyl-coenzyme M + 2 Na(+)(out). It participates in one-carbon metabolism; methanogenesis from CO(2); methyl-coenzyme M from 5,10-methylene-5,6,7,8-tetrahydromethanopterin: step 2/2. Part of a complex that catalyzes the formation of methyl-coenzyme M and tetrahydromethanopterin from coenzyme M and methyl-tetrahydromethanopterin. This is an energy-conserving, sodium-ion translocating step. This Methanosarcina acetivorans (strain ATCC 35395 / DSM 2834 / JCM 12185 / C2A) protein is Tetrahydromethanopterin S-methyltransferase subunit E.